A 210-amino-acid chain; its full sequence is Scoloptoxin SSD552 (210 aa).

An N-terminal signal peptide occupies residues 1–23 (MNILLSSTLFVLLMFQIIGSGMG).

In terms of processing, contains 3 disulfide bonds. In terms of tissue distribution, expressed by the venom gland.

It localises to the secreted. The polypeptide is Scoloptoxin SSD552 (Scolopendra dehaani (Thai centipede)).